The sequence spans 292 residues: Proteasome subunit beta 2 (292 aa).

Residues 1 to 59 constitute a propeptide, removed in mature form; by autocatalysis; sequence MTVDRAPRITDGDTRLSFGSNLSSFSEYLRVHAPEHLPQNRFADTGGVVMGGGDVAPHG. The active-site Nucleophile is T60.

Belongs to the peptidase T1B family. As to quaternary structure, the 20S proteasome core is composed of 14 alpha and 14 beta subunits that assemble into four stacked heptameric rings, resulting in a barrel-shaped structure. The two inner rings, each composed of seven catalytic beta subunits, are sandwiched by two outer rings, each composed of seven alpha subunits. All four combinations of alpha- and beta-subunits (beta2-alpha1, beta2-alpha2, beta1-alpha2 and beta1-alpha1) yield fully assembled and proteolytically active proteasomes. The catalytic chamber with the active sites is on the inside of the barrel. Has probably a gated structure, the ends of the cylinder being occluded by the N-termini of the alpha-subunits. Is likely capped by the proteasome-associated ATPase, ARC.

The protein resides in the cytoplasm. It carries out the reaction Cleavage of peptide bonds with very broad specificity.. It functions in the pathway protein degradation; proteasomal Pup-dependent pathway. The formation of the proteasomal ATPase ARC-20S proteasome complex, likely via the docking of the C-termini of ARC into the intersubunit pockets in the alpha-rings, may trigger opening of the gate for substrate entry. Interconversion between the open-gate and close-gate conformations leads to a dynamic regulation of the 20S proteasome proteolysis activity. Its function is as follows. Component of the proteasome core, a large protease complex with broad specificity involved in protein degradation. The R.erythropolis proteasomes are able to cleave oligopeptides after Tyr, Phe and Leu, very poorly after Arg but not after Glu. Thus, displays chymotrypsin-like activity, low trypsin-like activity but no caspase-like activity. This chain is Proteasome subunit beta 2, found in Rhodococcus erythropolis (Arthrobacter picolinophilus).